The sequence spans 94 residues: Large ribosomal subunit protein bL25 (94 aa).

The protein belongs to the bacterial ribosomal protein bL25 family. As to quaternary structure, part of the 50S ribosomal subunit; part of the 5S rRNA/L5/L18/L25 subcomplex. Contacts the 5S rRNA. Binds to the 5S rRNA independently of L5 and L18.

Its function is as follows. This is one of the proteins that binds to the 5S RNA in the ribosome where it forms part of the central protuberance. This chain is Large ribosomal subunit protein bL25, found in Shigella boydii serotype 4 (strain Sb227).